The sequence spans 251 residues: Adenylate kinase (251 aa).

ATP is bound at residue 46–51 (GAGKGT). Residues 66-95 (ATGDMLRSQVQQQTPLGVEAKKIMDAGGLV) form an NMP region. Residues T67, R72, 93–95 (GLV), 122–125 (GFPR), and Q129 contribute to the AMP site. Positions 163 to 200 (GRLVHPASGRSYHKVFNPPKKEMIDDITGEALVQRSDD) are LID. ATP is bound by residues R164 and 173–174 (SY). AMP contacts are provided by R197 and R208. Q236 contacts ATP.

It belongs to the adenylate kinase family. AK2 subfamily. Monomer.

It localises to the cytoplasm. Its subcellular location is the cytosol. It is found in the mitochondrion intermembrane space. It carries out the reaction AMP + ATP = 2 ADP. Functionally, catalyzes the reversible transfer of the terminal phosphate group between ATP and AMP. Plays an important role in cellular energy homeostasis and in adenine nucleotide metabolism. Adenylate kinase activity is critical for regulation of the phosphate utilization and the AMP de novo biosynthesis pathways. This chain is Adenylate kinase, found in Yarrowia lipolytica (strain CLIB 122 / E 150) (Yeast).